The following is a 210-amino-acid chain: ATP-dependent Clp protease proteolytic subunit (210 aa).

Residue Ser-107 is the Nucleophile of the active site. His-132 is a catalytic residue.

This sequence belongs to the peptidase S14 family. Fourteen ClpP subunits assemble into 2 heptameric rings which stack back to back to give a disk-like structure with a central cavity, resembling the structure of eukaryotic proteasomes.

It is found in the cytoplasm. The enzyme catalyses Hydrolysis of proteins to small peptides in the presence of ATP and magnesium. alpha-casein is the usual test substrate. In the absence of ATP, only oligopeptides shorter than five residues are hydrolyzed (such as succinyl-Leu-Tyr-|-NHMec, and Leu-Tyr-Leu-|-Tyr-Trp, in which cleavage of the -Tyr-|-Leu- and -Tyr-|-Trp bonds also occurs).. Functionally, cleaves peptides in various proteins in a process that requires ATP hydrolysis. Has a chymotrypsin-like activity. Plays a major role in the degradation of misfolded proteins. In Azorhizobium caulinodans (strain ATCC 43989 / DSM 5975 / JCM 20966 / LMG 6465 / NBRC 14845 / NCIMB 13405 / ORS 571), this protein is ATP-dependent Clp protease proteolytic subunit.